A 201-amino-acid chain; its full sequence is Large ribosomal subunit protein uL18 (201 aa).

This sequence belongs to the universal ribosomal protein uL18 family. In terms of assembly, part of the 50S ribosomal subunit. Contacts the 5S and 23S rRNAs.

This is one of the proteins that bind and probably mediate the attachment of the 5S RNA into the large ribosomal subunit, where it forms part of the central protuberance. In Thermococcus gammatolerans (strain DSM 15229 / JCM 11827 / EJ3), this protein is Large ribosomal subunit protein uL18.